Here is a 221-residue protein sequence, read N- to C-terminus: Cytidylate kinase 1 (221 aa).

7–15 (GPSASGKSS) contacts ATP.

Belongs to the cytidylate kinase family. Type 1 subfamily.

It is found in the cytoplasm. The enzyme catalyses CMP + ATP = CDP + ADP. It catalyses the reaction dCMP + ATP = dCDP + ADP. The polypeptide is Cytidylate kinase 1 (Borreliella burgdorferi (strain ATCC 35210 / DSM 4680 / CIP 102532 / B31) (Borrelia burgdorferi)).